A 203-amino-acid polypeptide reads, in one-letter code: Imidazoleglycerol-phosphate dehydratase (203 aa).

It belongs to the imidazoleglycerol-phosphate dehydratase family.

The protein localises to the cytoplasm. It carries out the reaction D-erythro-1-(imidazol-4-yl)glycerol 3-phosphate = 3-(imidazol-4-yl)-2-oxopropyl phosphate + H2O. It participates in amino-acid biosynthesis; L-histidine biosynthesis; L-histidine from 5-phospho-alpha-D-ribose 1-diphosphate: step 6/9. This Salinispora arenicola (strain CNS-205) protein is Imidazoleglycerol-phosphate dehydratase.